The primary structure comprises 445 residues: Clusterin (445 aa).

The N-terminal stretch at 1–22 (MMKTLLLLVGLLLTWDNGRVLG) is a signal peptide. The short motif at 78 to 81 (KKKK) is the Nuclear localization signal element. Asn86 and Asn103 each carry an N-linked (GlcNAc...) asparagine glycan. 5 cysteine pairs are disulfide-bonded: Cys102/Cys309, Cys113/Cys301, Cys116/Cys298, Cys121/Cys291, and Cys129/Cys281. A Phosphoserine modification is found at Ser133. N-linked (GlcNAc...) asparagine glycans are attached at residues Asn145, Asn277, Asn287, Asn350, and Asn370. Residue Ser392 is modified to Phosphoserine. A Nuclear localization signal motif is present at residues 439 to 443 (RQKHR).

Belongs to the clusterin family. Antiparallel disulfide-linked heterodimer of an alpha chain and a beta chain. Self-associates and forms higher oligomers. Interacts with a broad range of misfolded proteins, including APP, APOC2 and LYZ. Slightly acidic pH promotes interaction with misfolded proteins. Forms high-molecular weight oligomers upon interaction with misfolded proteins. Interacts with APOA1, LRP2, CLUAP1 and PON1. Interacts with the complement membrane attack complex. Interacts (via alpha chain) with XRCC6. Interacts with SYVN1, COMMD1, BTRC, CUL1 and with ubiquitin and SCF (SKP1-CUL1-F-box protein) E3 ubiquitin-protein ligase complexes. Interacts (via alpha chain) with BAX in stressed cells, where BAX undergoes a conformation change leading to association with the mitochondrial membrane. Does not interact with BAX in unstressed cells. Found in a complex with LTF, CLU, EPPIN and SEMG1. Interacts (immaturely glycosylated pre-secreted form) with HSPA5; this interaction promotes CLU stability and facilitates stress-induced CLU retrotranslocation from the secretory pathway to the mitochondria, thereby reducing stress-induced apoptosis by stabilizing mitochondrial membrane integrity. Interacts with BCL2L1; this interaction releases and activates BAX and promotes cell death. Interacts with TGFBR2 and ACVR1. Interacts (secreted form) with STMN3; this interaction may act as an important modulator during neuronal differentiation. Interacts with VLDLR and LRP8. Proteolytically cleaved on its way through the secretory system, probably within the Golgi lumen. Proteolytic cleavage is not necessary for its chaperone activity. All non-secreted forms are not proteolytically cleaved. Chaperone activity of uncleaved forms is dependent on a non-reducing environment. This proteolytic maturation is disulfide bond formation dependent. Post-translationally, polyubiquitinated, leading to proteasomal degradation. Under cellular stress, the intracellular level of cleaved form is reduced due to proteasomal degradation. In terms of processing, heavily N-glycosylated. About 30% of the protein mass is comprised of complex N-linked carbohydrate. Endoplasmic reticulum (ER) stress induces changes in glycosylation status and increases level of hypoglycosylated forms. Core carbohydrates are essential for chaperone activity. Non-secreted forms are hypoglycosylated or unglycosylated.

The protein localises to the secreted. It localises to the nucleus. Its subcellular location is the cytoplasm. The protein resides in the mitochondrion membrane. It is found in the cytosol. The protein localises to the microsome. It localises to the endoplasmic reticulum. Its subcellular location is the mitochondrion. The protein resides in the perinuclear region. It is found in the cytoplasmic vesicle. The protein localises to the secretory vesicle. It localises to the chromaffin granule. In terms of biological role, functions as extracellular chaperone that prevents aggregation of non native proteins. Prevents stress-induced aggregation of blood plasma proteins. Inhibits formation of amyloid fibrils by APP, APOC2, B2M, CALCA, CSN3, SNCA and aggregation-prone LYZ variants (in vitro). Does not require ATP. Maintains partially unfolded proteins in a state appropriate for subsequent refolding by other chaperones, such as HSPA8/HSC70. Does not refold proteins by itself. Binding to cell surface receptors triggers internalization of the chaperone-client complex and subsequent lysosomal or proteasomal degradation. When secreted, protects cells against apoptosis and against cytolysis by complement: inhibits assembly of the complement membrane attack complex (MAC) by preventing polymerization of C9 pore component of the MAC complex. Intracellular forms interact with ubiquitin and SCF (SKP1-CUL1-F-box protein) E3 ubiquitin-protein ligase complexes and promote the ubiquitination and subsequent proteasomal degradation of target proteins. Promotes proteasomal degradation of COMMD1 and IKBKB. Modulates NF-kappa-B transcriptional activity. Following stress, promotes apoptosis. Inhibits apoptosis when associated with the mitochondrial membrane by interference with BAX-dependent release of cytochrome c into the cytoplasm. Plays a role in the regulation of cell proliferation. An intracellular form suppresses stress-induced apoptosis by stabilizing mitochondrial membrane integrity through interaction with HSPA5. Secreted form does not affect caspase or BAX-mediated intrinsic apoptosis and TNF-induced NF-kappa-B-activity. Secreted form act as an important modulator during neuronal differentiation through interaction with STMN3. Plays a role in the clearance of immune complexes that arise during cell injury. This Canis lupus familiaris (Dog) protein is Clusterin (CLU).